Here is a 259-residue protein sequence, read N- to C-terminus: uncharacterized protein (259 aa).

To M.thermoautotrophicum MTH738.

This is an uncharacterized protein from Methanocaldococcus jannaschii (strain ATCC 43067 / DSM 2661 / JAL-1 / JCM 10045 / NBRC 100440) (Methanococcus jannaschii).